The following is a 307-amino-acid chain: Taste receptor type 2 member 41 (307 aa).

Topologically, residues 1-7 (MQAALTA) are extracellular. Residues 8 to 28 (FFMLLFSLLSLLGIAANGFIV) traverse the membrane as a helical segment. Residues 29-40 (LVLGREWLRYGR) are Cytoplasmic-facing. Residues 41–61 (LLPLDMILISLGASRFCLQLV) traverse the membrane as a helical segment. The Extracellular segment spans residues 62–88 (GTVHNFYYSAQKVEYSGGLGRQFFHLH). The helical transmembrane segment at 89–109 (WHFLNSATFWFCSWLSVLFCV) threads the bilayer. The Cytoplasmic segment spans residues 110-129 (KIANITHPTFLWLKWRFPGW). Residues 130–150 (VPWLLLGSVLISFIITLLFFW) form a helical membrane-spanning segment. Residues 151 to 183 (VNYPAYQEFLIRKFSVNMTYKWNTRIETYYFPS) lie on the Extracellular side of the membrane. N-linked (GlcNAc...) asparagine glycosylation is present at N167. The chain crosses the membrane as a helical span at residues 184–204 (LKLVIWSIPFSVFLVSIMLLI). The Cytoplasmic segment spans residues 205–234 (NSLRRHTQRMQHNGHSLQDPSTQAHTRALK). A helical membrane pass occupies residues 235 to 255 (SLISFLILYALSFLSLIIDAT). Over 256-264 (KFISMQNDF) the chain is Extracellular. Residues 265–285 (YWPWQIAVYLCISVHPFILIF) form a helical membrane-spanning segment. Residues 286–307 (SNLKLRSVFSQLLLLARGFWVA) lie on the Cytoplasmic side of the membrane.

The protein belongs to the G-protein coupled receptor T2R family.

Its subcellular location is the membrane. Functionally, receptor that may play a role in the perception of bitterness and is gustducin-linked. May play a role in sensing the chemical composition of the gastrointestinal content. The activity of this receptor may stimulate alpha gustducin, mediate PLC-beta-2 activation and lead to the gating of TRPM5. This is Taste receptor type 2 member 41 (TAS2R41) from Pan troglodytes (Chimpanzee).